Reading from the N-terminus, the 121-residue chain is UPF0102 protein Xfasm12_1748 (121 aa).

Belongs to the UPF0102 family.

The polypeptide is UPF0102 protein Xfasm12_1748 (Xylella fastidiosa (strain M12)).